We begin with the raw amino-acid sequence, 129 residues long: Translation initiation factor 5A (129 aa).

A Hypusine modification is found at Lys36.

The protein belongs to the eIF-5A family.

Its subcellular location is the cytoplasm. In terms of biological role, functions by promoting the formation of the first peptide bond. In Thermoplasma acidophilum (strain ATCC 25905 / DSM 1728 / JCM 9062 / NBRC 15155 / AMRC-C165), this protein is Translation initiation factor 5A (eif5a).